Here is a 674-residue protein sequence, read N- to C-terminus: Methionine--tRNA ligase (674 aa).

The short motif at 11–21 is the 'HIGH' region element; it reads PYANGDLHLGH. The Zn(2+) site is built by C142, C145, C155, and C158. Positions 330-334 match the 'KMSKS' region motif; it reads KMSKS. K333 lines the ATP pocket. Residues 574–674 form the tRNA-binding domain; the sequence is DFMKVDLRIA…EGAQPGMRVK (101 aa).

This sequence belongs to the class-I aminoacyl-tRNA synthetase family. MetG type 1 subfamily. As to quaternary structure, homodimer. Requires Zn(2+) as cofactor.

The protein localises to the cytoplasm. It carries out the reaction tRNA(Met) + L-methionine + ATP = L-methionyl-tRNA(Met) + AMP + diphosphate. Functionally, is required not only for elongation of protein synthesis but also for the initiation of all mRNA translation through initiator tRNA(fMet) aminoacylation. In Francisella tularensis subsp. holarctica (strain FTNF002-00 / FTA), this protein is Methionine--tRNA ligase.